A 196-amino-acid chain; its full sequence is Thymidine kinase (196 aa).

ATP-binding positions include 9–16 and 85–88; these read GTMNSGKS and DEAQ. Glu86 serves as the catalytic Proton acceptor. The Zn(2+) site is built by Cys143, Cys146, Cys180, and His183.

Belongs to the thymidine kinase family. Homotetramer.

It is found in the cytoplasm. It carries out the reaction thymidine + ATP = dTMP + ADP + H(+). The sequence is that of Thymidine kinase from Streptococcus thermophilus (strain CNRZ 1066).